The following is a 534-amino-acid chain: Cytokinin dehydrogenase 5 (534 aa).

Residues methionine 1 to glycine 20 form the signal peptide. The region spanning threonine 59–alanine 243 is the FAD-binding PCMH-type domain. 3 residues coordinate FAD: alanine 93, glycine 95, and glycine 97. At histidine 98 the chain carries Pros-8alpha-FAD histidine. The FAD site is built by serine 99 and glutamine 103. Residue asparagine 152 is glycosylated (N-linked (GlcNAc...) asparagine). Residues aspartate 167, serine 172, serine 178, isoleucine 182, and isoleucine 233 each contribute to the FAD site. Asparagine 256 carries N-linked (GlcNAc...) asparagine glycosylation. Tyrosine 484 and glutamine 522 together coordinate FAD.

The protein belongs to the oxygen-dependent FAD-linked oxidoreductase family. As to quaternary structure, monomer. It depends on FAD as a cofactor. As to expression, expressed in inflorescence meristems.

The protein localises to the secreted. It localises to the extracellular space. It carries out the reaction N(6)-dimethylallyladenine + A + H2O = 3-methyl-2-butenal + adenine + AH2. Catalyzes the oxidation of cytokinins, a family of N(6)-substituted adenine derivatives that are plant hormones, where the substituent is an isopentenyl group. The sequence is that of Cytokinin dehydrogenase 5 (CKX5) from Oryza sativa subsp. japonica (Rice).